We begin with the raw amino-acid sequence, 164 residues long: UPF0304 protein YfbU (164 aa).

It belongs to the UPF0304 family.

In Escherichia coli O139:H28 (strain E24377A / ETEC), this protein is UPF0304 protein YfbU.